We begin with the raw amino-acid sequence, 345 residues long: NADH-ubiquinone oxidoreductase chain 2 (345 aa).

Helical transmembrane passes span 3 to 23 (PYIL…TFAS), 25 to 45 (NWLL…PLMA), 59 to 79 (YFIT…INAW), 95 to 115 (ALMT…FWLP), 148 to 168 (LMPE…GWGG), 177 to 196 (IMAY…MHFM), 201 to 223 (IINL…TLNS), 236 to 256 (FPAL…LPPL), 273 to 293 (NLAL…YFYL), and 322 to 342 (FILP…PSII).

The protein belongs to the complex I subunit 2 family.

The protein localises to the mitochondrion inner membrane. It catalyses the reaction a ubiquinone + NADH + 5 H(+)(in) = a ubiquinol + NAD(+) + 4 H(+)(out). Its function is as follows. Core subunit of the mitochondrial membrane respiratory chain NADH dehydrogenase (Complex I) that is believed to belong to the minimal assembly required for catalysis. Complex I functions in the transfer of electrons from NADH to the respiratory chain. The immediate electron acceptor for the enzyme is believed to be ubiquinone. This Polypterus ornatipinnis (Ornate bichir) protein is NADH-ubiquinone oxidoreductase chain 2 (MT-ND2).